Consider the following 67-residue polypeptide: Beta-defensin 123 (67 aa).

A signal peptide spans 1–20 (MKLLLLTLTVLLLLSQLTPG). 3 cysteine pairs are disulfide-bonded: Cys25-Cys52, Cys32-Cys46, and Cys36-Cys53.

This sequence belongs to the beta-defensin family.

The protein localises to the secreted. Functionally, has antibacterial activity. The chain is Beta-defensin 123 (DEFB123) from Gorilla gorilla gorilla (Western lowland gorilla).